The primary structure comprises 204 residues: LexA repressor (204 aa).

The H-T-H motif DNA-binding region spans 28–48; it reads RAEIAQELGFKSPNAAEEHLK. Catalysis depends on for autocatalytic cleavage activity residues Ser-125 and Lys-162.

It belongs to the peptidase S24 family. Homodimer.

It catalyses the reaction Hydrolysis of Ala-|-Gly bond in repressor LexA.. Represses a number of genes involved in the response to DNA damage (SOS response), including recA and lexA. In the presence of single-stranded DNA, RecA interacts with LexA causing an autocatalytic cleavage which disrupts the DNA-binding part of LexA, leading to derepression of the SOS regulon and eventually DNA repair. This Pseudomonas aeruginosa (strain LESB58) protein is LexA repressor.